The following is a 1167-amino-acid chain: RNA-directed RNA polymerase (1167 aa).

Residues 553–735 (LTYGILAEAT…KALASYTGLE (183 aa)) enclose the RdRp catalytic domain.

This sequence belongs to the reoviridae RNA-directed RNA polymerase family. Interacts with VP3 (Potential). Interacts with VP2 (Potential). Interacts with NSP5; this interaction is probably necessary for the formation of functional virus factories.

It is found in the virion. It catalyses the reaction RNA(n) + a ribonucleoside 5'-triphosphate = RNA(n+1) + diphosphate. Functionally, RNA-directed RNA polymerase that is involved in both transcription and genome replication. Together with VP3 capping enzyme, forms an enzyme complex positioned near the channels situated at each of the five-fold vertices of the core. Following infection, the outermost layer of the virus is lost, leaving a double-layered particle (DLP) made up of the core and VP6 shell. VP1 then catalyzes the transcription of fully conservative plus-strand genomic RNAs that are extruded through the DLP's channels into the cytoplasm where they function as mRNAs for translation of viral proteins. One copy of each of the viral (+)RNAs is also recruited during core assembly, together with newly synthesized polymerase complexes and VP2. The polymerase of these novo-formed particles catalyzes the synthesis of complementary minus-strands leading to dsDNA formation. To do so, the polymerase specifically recognizes conserved 3' sequence(s) in plus-strand RNA templates. Once dsRNA synthesis is complete, the polymerase switches to the transcriptional mode, thus providing secondary transcription. This is RNA-directed RNA polymerase from Rotavirus X (isolate RVX/Human/Bangladesh/NADRV-B219/2002/GXP[X]) (RV ADRV-N).